Reading from the N-terminus, the 316-residue chain is N-acetyl-gamma-glutamyl-phosphate reductase (316 aa).

The active site involves Cys-136.

The protein belongs to the NAGSA dehydrogenase family. Type 1 subfamily.

Its subcellular location is the cytoplasm. The enzyme catalyses N-acetyl-L-glutamate 5-semialdehyde + phosphate + NADP(+) = N-acetyl-L-glutamyl 5-phosphate + NADPH + H(+). It participates in amino-acid biosynthesis; L-arginine biosynthesis; N(2)-acetyl-L-ornithine from L-glutamate: step 3/4. Functionally, catalyzes the NADPH-dependent reduction of N-acetyl-5-glutamyl phosphate to yield N-acetyl-L-glutamate 5-semialdehyde. The protein is N-acetyl-gamma-glutamyl-phosphate reductase of Xanthomonas campestris pv. campestris (strain 8004).